Reading from the N-terminus, the 125-residue chain is Holo-[acyl-carrier-protein] synthase (125 aa).

The Mg(2+) site is built by Asp8 and Glu57.

It belongs to the P-Pant transferase superfamily. AcpS family. The cofactor is Mg(2+).

The protein localises to the cytoplasm. It catalyses the reaction apo-[ACP] + CoA = holo-[ACP] + adenosine 3',5'-bisphosphate + H(+). Transfers the 4'-phosphopantetheine moiety from coenzyme A to a Ser of acyl-carrier-protein. The protein is Holo-[acyl-carrier-protein] synthase of Solibacter usitatus (strain Ellin6076).